The sequence spans 297 residues: T-cell leukemia homeobox protein 3 (297 aa).

The tract at residues 1–68 is disordered; it reads MEPAAGAQGP…LGGPRGGAPY (68 aa). Residues 32–52 show a composition bias toward pro residues; sequence APPPPPPPPPPPPPPPPPPRG. The segment at residues 172 to 231 is a DNA-binding region (homeobox); sequence RKKPRTSFSRVQICELEKRFHRQKYLASAERAALAKSLKMTDAQVKTWFQNRRTKWRRQT.

As to expression, expression is restricted to neurons in the peripheral and central nervous system.

It is found in the nucleus. Seems to be involved in the development of cranial sensory innervation from peripheral ganglia. This Gallus gallus (Chicken) protein is T-cell leukemia homeobox protein 3 (TLX3).